Consider the following 439-residue polypeptide: Glutamate--tRNA ligase 1 (439 aa).

The 'HIGH' region signature appears at 6-16 (PSPTGDMHIGN). A 'KMSKS' region motif is present at residues 232–236 (KMSKR). Lysine 235 contributes to the ATP binding site.

This sequence belongs to the class-I aminoacyl-tRNA synthetase family. Glutamate--tRNA ligase type 1 subfamily. In terms of assembly, monomer.

It is found in the cytoplasm. It carries out the reaction tRNA(Glu) + L-glutamate + ATP = L-glutamyl-tRNA(Glu) + AMP + diphosphate. Catalyzes the attachment of glutamate to tRNA(Glu) in a two-step reaction: glutamate is first activated by ATP to form Glu-AMP and then transferred to the acceptor end of tRNA(Glu). This Helicobacter acinonychis (strain Sheeba) protein is Glutamate--tRNA ligase 1.